Reading from the N-terminus, the 218-residue chain is Uracil-DNA glycosylase (218 aa).

The Proton acceptor role is filled by aspartate 60.

Belongs to the uracil-DNA glycosylase (UDG) superfamily. UNG family.

It localises to the cytoplasm. It carries out the reaction Hydrolyzes single-stranded DNA or mismatched double-stranded DNA and polynucleotides, releasing free uracil.. Functionally, excises uracil residues from the DNA which can arise as a result of misincorporation of dUMP residues by DNA polymerase or due to deamination of cytosine. The chain is Uracil-DNA glycosylase from Francisella philomiragia subsp. philomiragia (strain ATCC 25017 / CCUG 19701 / FSC 153 / O#319-036).